The primary structure comprises 419 residues: Gamma-glutamyl phosphate reductase (419 aa).

It belongs to the gamma-glutamyl phosphate reductase family.

Its subcellular location is the cytoplasm. The catalysed reaction is L-glutamate 5-semialdehyde + phosphate + NADP(+) = L-glutamyl 5-phosphate + NADPH + H(+). The protein operates within amino-acid biosynthesis; L-proline biosynthesis; L-glutamate 5-semialdehyde from L-glutamate: step 2/2. In terms of biological role, catalyzes the NADPH-dependent reduction of L-glutamate 5-phosphate into L-glutamate 5-semialdehyde and phosphate. The product spontaneously undergoes cyclization to form 1-pyrroline-5-carboxylate. The protein is Gamma-glutamyl phosphate reductase of Yersinia enterocolitica serotype O:8 / biotype 1B (strain NCTC 13174 / 8081).